We begin with the raw amino-acid sequence, 237 residues long: MTAHKPGDPTTLNRLYGRSKGKPLRAGQQDLVDTLLPQIAVPLDGEVTARRLFGFDRPLHFEIGFGGGEHMAARADMLPDHGFIGAEPFINGVAQALVHVAGDHGQHPPLGNVRIHHGDALEVLRRIPDGALAFVYLLHPDPWPKARHAKRRMMNDGPLDLIAAKLKPGGEFRFGTDHPIYLRHALMVMRRHRHQFEWLAKDARDFQVRPGGWPETRYEAKARAQGHEVWYFRWRRR.

The tract at residues 1 to 24 (MTAHKPGDPTTLNRLYGRSKGKPL) is disordered. S-adenosyl-L-methionine-binding residues include Glu62, Glu87, Asp119, and Asp141. Residue Asp141 is part of the active site. Residues Lys145, Asp177, and 216–219 (TRYE) each bind substrate.

Belongs to the class I-like SAM-binding methyltransferase superfamily. TrmB family.

The catalysed reaction is guanosine(46) in tRNA + S-adenosyl-L-methionine = N(7)-methylguanosine(46) in tRNA + S-adenosyl-L-homocysteine. It functions in the pathway tRNA modification; N(7)-methylguanine-tRNA biosynthesis. Its function is as follows. Catalyzes the formation of N(7)-methylguanine at position 46 (m7G46) in tRNA. This Sphingopyxis alaskensis (strain DSM 13593 / LMG 18877 / RB2256) (Sphingomonas alaskensis) protein is tRNA (guanine-N(7)-)-methyltransferase.